A 525-amino-acid chain; its full sequence is Coronin-2A (525 aa).

WD repeat units follow at residues Gly80–Asn120, Gly130–Met170, Cys178–Glu217, Tyr220–Thr263, and Gly269–Asn308. A coiled-coil region spans residues Gln485–Arg524.

The protein belongs to the WD repeat coronin family. In terms of assembly, binds actin. Component of the N-Cor repressor complex, at least composed of NCOR1, NCOR2, HDAC3, TBL1X, TBL1R, CORO2A and GPS2.

The protein is Coronin-2A (CORO2A) of Bos taurus (Bovine).